The primary structure comprises 216 residues: Pyridoxine/pyridoxamine 5'-phosphate oxidase (216 aa).

Substrate-binding positions include 12–15 and lysine 70; that span reads RKSY. FMN is bound by residues 65 to 70, 80 to 81, arginine 86, and lysine 87; these read RVVLVK and FT. 3 residues coordinate substrate: tyrosine 127, arginine 131, and serine 135. FMN-binding positions include 144-145 and tryptophan 188; that span reads QS. Residue 194–196 coordinates substrate; it reads RLH. FMN is bound at residue arginine 198.

It belongs to the pyridoxamine 5'-phosphate oxidase family. In terms of assembly, homodimer. The cofactor is FMN.

It catalyses the reaction pyridoxamine 5'-phosphate + O2 + H2O = pyridoxal 5'-phosphate + H2O2 + NH4(+). The catalysed reaction is pyridoxine 5'-phosphate + O2 = pyridoxal 5'-phosphate + H2O2. Its pathway is cofactor metabolism; pyridoxal 5'-phosphate salvage; pyridoxal 5'-phosphate from pyridoxamine 5'-phosphate: step 1/1. It functions in the pathway cofactor metabolism; pyridoxal 5'-phosphate salvage; pyridoxal 5'-phosphate from pyridoxine 5'-phosphate: step 1/1. Functionally, catalyzes the oxidation of either pyridoxine 5'-phosphate (PNP) or pyridoxamine 5'-phosphate (PMP) into pyridoxal 5'-phosphate (PLP). This Polaromonas sp. (strain JS666 / ATCC BAA-500) protein is Pyridoxine/pyridoxamine 5'-phosphate oxidase.